A 348-amino-acid polypeptide reads, in one-letter code: Large ribosomal subunit protein uL10 (348 aa).

The disordered stretch occupies residues 291 to 348 (LPEELRGVSAADTGAAEEEESTDEEAADADQADAAEDDDAADDDGDDEDAGDALGSLF). Positions 305–341 (AAEEEESTDEEAADADQADAAEDDDAADDDGDDEDAG) are enriched in acidic residues.

Belongs to the universal ribosomal protein uL10 family. As to quaternary structure, part of the 50S ribosomal subunit. Forms part of the ribosomal stalk which helps the ribosome interact with GTP-bound translation factors. Forms a heptameric L10(L12)2(L12)2(L12)2 complex, where L10 forms an elongated spine to which the L12 dimers bind in a sequential fashion.

Its function is as follows. Forms part of the ribosomal stalk, playing a central role in the interaction of the ribosome with GTP-bound translation factors. The protein is Large ribosomal subunit protein uL10 of Haloferax volcanii (strain ATCC 29605 / DSM 3757 / JCM 8879 / NBRC 14742 / NCIMB 2012 / VKM B-1768 / DS2) (Halobacterium volcanii).